The sequence spans 136 residues: Large ribosomal subunit protein uL3 (136 aa).

Glutamine 83 is modified (N5-methylglutamine).

Belongs to the universal ribosomal protein uL3 family. Part of the 50S ribosomal subunit. Forms a cluster with proteins L14 and L19. Post-translationally, methylated by PrmB.

Functionally, one of the primary rRNA binding proteins, it binds directly near the 3'-end of the 23S rRNA, where it nucleates assembly of the 50S subunit. This chain is Large ribosomal subunit protein uL3 (rplC), found in Carsonella ruddii.